A 359-amino-acid chain; its full sequence is Peptide chain release factor 1 (359 aa).

Residue Gln-236 is modified to N5-methylglutamine.

The protein belongs to the prokaryotic/mitochondrial release factor family. In terms of processing, methylated by PrmC. Methylation increases the termination efficiency of RF1.

The protein localises to the cytoplasm. In terms of biological role, peptide chain release factor 1 directs the termination of translation in response to the peptide chain termination codons UAG and UAA. The chain is Peptide chain release factor 1 from Streptococcus pneumoniae serotype 19F (strain G54).